A 415-amino-acid polypeptide reads, in one-letter code: MNALRAIDFKRDDPNNVSVSVLDQLLLPYTTKYIPIYTIDDGFTVIKKMQVRGAPAIAIVGALSVLMESQLLLSEGFCKTQYYYNLNDWENIRSKIDERLAFLLSSRPTAINLSNALDEIKIVLDSASDLQTFKNNLFDYVCKLIDDDFANNKRMGDNGAEFLLNLLKKENFNEDFAVFTICNTGSLATSGYGTALGVIRSLWNDSKSKTQEGNPNKKVKLTESSPKMVQVFPLETRPYNQGSRLTAYELVHDDIPATLIPDSSIAYKIMTSKIPIKAAFVGADRIVRNGDTANKIGTLQLAIICKQFGIKFFVVAPRTTIDKVTEEGKDIIVEERNANEFKIVTGSAVDMQTNKPILDEKNEPITAKVGIAPENINVWNPAFDITSFEYIDGIVTEVGVFTKNENGNFDLSALH.

Aspartate 284 functions as the Proton donor in the catalytic mechanism.

It belongs to the eIF-2B alpha/beta/delta subunits family. MtnA subfamily.

The protein resides in the cytoplasm. It localises to the nucleus. It catalyses the reaction 5-(methylsulfanyl)-alpha-D-ribose 1-phosphate = 5-(methylsulfanyl)-D-ribulose 1-phosphate. The protein operates within amino-acid biosynthesis; L-methionine biosynthesis via salvage pathway; L-methionine from S-methyl-5-thio-alpha-D-ribose 1-phosphate: step 1/6. Its function is as follows. Catalyzes the interconversion of methylthioribose-1-phosphate (MTR-1-P) into methylthioribulose-1-phosphate (MTRu-1-P). In Candida glabrata (strain ATCC 2001 / BCRC 20586 / JCM 3761 / NBRC 0622 / NRRL Y-65 / CBS 138) (Yeast), this protein is Methylthioribose-1-phosphate isomerase.